The primary structure comprises 308 residues: Transaldolase (308 aa).

Catalysis depends on Lys125, which acts as the Schiff-base intermediate with substrate.

The protein belongs to the transaldolase family. Type 1 subfamily. As to quaternary structure, homodimer.

The protein localises to the cytoplasm. It catalyses the reaction D-sedoheptulose 7-phosphate + D-glyceraldehyde 3-phosphate = D-erythrose 4-phosphate + beta-D-fructose 6-phosphate. It functions in the pathway carbohydrate degradation; pentose phosphate pathway; D-glyceraldehyde 3-phosphate and beta-D-fructose 6-phosphate from D-ribose 5-phosphate and D-xylulose 5-phosphate (non-oxidative stage): step 2/3. Functionally, transaldolase is important for the balance of metabolites in the pentose-phosphate pathway. The chain is Transaldolase from Pseudomonas entomophila (strain L48).